Consider the following 257-residue polypeptide: Imidazole glycerol phosphate synthase subunit HisF (257 aa).

Residues Asp-12 and Asp-131 contribute to the active site.

This sequence belongs to the HisA/HisF family. As to quaternary structure, heterodimer of HisH and HisF.

It localises to the cytoplasm. The enzyme catalyses 5-[(5-phospho-1-deoxy-D-ribulos-1-ylimino)methylamino]-1-(5-phospho-beta-D-ribosyl)imidazole-4-carboxamide + L-glutamine = D-erythro-1-(imidazol-4-yl)glycerol 3-phosphate + 5-amino-1-(5-phospho-beta-D-ribosyl)imidazole-4-carboxamide + L-glutamate + H(+). The protein operates within amino-acid biosynthesis; L-histidine biosynthesis; L-histidine from 5-phospho-alpha-D-ribose 1-diphosphate: step 5/9. Functionally, IGPS catalyzes the conversion of PRFAR and glutamine to IGP, AICAR and glutamate. The HisF subunit catalyzes the cyclization activity that produces IGP and AICAR from PRFAR using the ammonia provided by the HisH subunit. This chain is Imidazole glycerol phosphate synthase subunit HisF, found in Kineococcus radiotolerans (strain ATCC BAA-149 / DSM 14245 / SRS30216).